The sequence spans 599 residues: Membrane protein insertase YidC (599 aa).

Residues 6–26 (NYFIAIALSVVIVLAWQFLYM) traverse the membrane as a helical segment. The tract at residues 35-78 (RAEEARQAQQQTTQQQPAPGAAPGATVEGAPPASSTQAAATATR) is disordered. Positions 41 to 76 (QAQQQTTQQQPAPGAAPGATVEGAPPASSTQAAATA) are enriched in low complexity. 4 helical membrane-spanning segments follow: residues 378-398 (FGVAILLTTIVVKALFFPLAS), 448-468 (WPMLLQIPVFFALYKVIYVTI), 501-521 (VPHFLMIGVWPLVMGITMFLQ), and 536-556 (IFTWMPLIFTFMLASFPAGLV).

Belongs to the OXA1/ALB3/YidC family. Type 1 subfamily. As to quaternary structure, interacts with the Sec translocase complex via SecD. Specifically interacts with transmembrane segments of nascent integral membrane proteins during membrane integration.

It localises to the cell inner membrane. Functionally, required for the insertion and/or proper folding and/or complex formation of integral membrane proteins into the membrane. Involved in integration of membrane proteins that insert both dependently and independently of the Sec translocase complex, as well as at least some lipoproteins. Aids folding of multispanning membrane proteins. This Agrobacterium fabrum (strain C58 / ATCC 33970) (Agrobacterium tumefaciens (strain C58)) protein is Membrane protein insertase YidC.